The chain runs to 200 residues: Probable GTP-binding protein EngB (200 aa).

The region spanning 26 to 200 is the EngB-type G domain; the sequence is SIPEIAIAGR…IYEIAQCIKK (175 aa). GTP is bound by residues 34–41, 61–65, 80–83, 147–150, and 179–181; these read GRSNVGKS, GCTKQ, DLPG, TKID, and TSS. Mg(2+)-binding residues include serine 41 and threonine 63.

The protein belongs to the TRAFAC class TrmE-Era-EngA-EngB-Septin-like GTPase superfamily. EngB GTPase family. The cofactor is Mg(2+).

Functionally, necessary for normal cell division and for the maintenance of normal septation. This chain is Probable GTP-binding protein EngB, found in Ehrlichia chaffeensis (strain ATCC CRL-10679 / Arkansas).